We begin with the raw amino-acid sequence, 559 residues long: Urocanate hydratase (559 aa).

NAD(+) is bound by residues 53–54, Gln131, 177–179, Glu197, Arg202, 243–244, 264–268, 274–275, and Tyr323; these read GG, GMG, NA, QTSAH, and YL. Cys411 is a catalytic residue. NAD(+) is bound at residue Gly493.

This sequence belongs to the urocanase family. It depends on NAD(+) as a cofactor.

The protein resides in the cytoplasm. The enzyme catalyses 4-imidazolone-5-propanoate = trans-urocanate + H2O. It participates in amino-acid degradation; L-histidine degradation into L-glutamate; N-formimidoyl-L-glutamate from L-histidine: step 2/3. Its function is as follows. Catalyzes the conversion of urocanate to 4-imidazolone-5-propionate. This is Urocanate hydratase from Pseudomonas aeruginosa (strain ATCC 15692 / DSM 22644 / CIP 104116 / JCM 14847 / LMG 12228 / 1C / PRS 101 / PAO1).